The sequence spans 139 residues: Large ribosomal subunit protein uL22 (139 aa).

Residues valine 118 to arginine 139 form a disordered region. Residues lysine 125–arginine 139 are compositionally biased toward basic residues.

Belongs to the universal ribosomal protein uL22 family. Part of the 50S ribosomal subunit.

In terms of biological role, this protein binds specifically to 23S rRNA; its binding is stimulated by other ribosomal proteins, e.g. L4, L17, and L20. It is important during the early stages of 50S assembly. It makes multiple contacts with different domains of the 23S rRNA in the assembled 50S subunit and ribosome. The globular domain of the protein is located near the polypeptide exit tunnel on the outside of the subunit, while an extended beta-hairpin is found that lines the wall of the exit tunnel in the center of the 70S ribosome. In Saccharopolyspora erythraea (strain ATCC 11635 / DSM 40517 / JCM 4748 / NBRC 13426 / NCIMB 8594 / NRRL 2338), this protein is Large ribosomal subunit protein uL22.